A 445-amino-acid chain; its full sequence is Phosphoglucosamine mutase (445 aa).

S102 acts as the Phosphoserine intermediate in catalysis. S102, D241, D243, and D245 together coordinate Mg(2+). S102 carries the phosphoserine modification.

It belongs to the phosphohexose mutase family. The cofactor is Mg(2+). In terms of processing, activated by phosphorylation.

It carries out the reaction alpha-D-glucosamine 1-phosphate = D-glucosamine 6-phosphate. Catalyzes the conversion of glucosamine-6-phosphate to glucosamine-1-phosphate. The chain is Phosphoglucosamine mutase from Escherichia fergusonii (strain ATCC 35469 / DSM 13698 / CCUG 18766 / IAM 14443 / JCM 21226 / LMG 7866 / NBRC 102419 / NCTC 12128 / CDC 0568-73).